We begin with the raw amino-acid sequence, 2563 residues long: Compactin diketide synthase mlcB (2563 aa).

In terms of domain architecture, Ketosynthase family 3 (KS3) spans 29 to 450; sequence STPIAIVGMG…GSNAHVILES (422 aa). Catalysis depends on for beta-ketoacyl synthase activity residues C202, H337, and H372. The interval 568–915 is acyl and malonyl transferase; the sequence is VFTGQGAQWH…TELISKGYGL (348 aa). The active-site For malonyltransferase activity is the S658. Residues 951-960 show a composition bias toward basic and acidic residues; the sequence is EPRGSRESKQ. The interval 951 to 971 is disordered; the sequence is EPRGSRESKQRTHPPHTLIGS. The tract at residues 966-1103 is N-terminal hotdog fold; sequence HTLIGSRESL…GLIRSESERS (138 aa). A PKS/mFAS DH domain is found at 966 to 1284; it reads HTLIGSRESL…FQSVGSSFSD (319 aa). The active-site Proton acceptor; for dehydratase activity is H998. The interval 998 to 1010 is dehydratase-like; sequence HVVGSSIIFPGAG. A C-terminal hotdog fold region spans residues 1121 to 1284; that stretch reads DNRSIDPNDL…FQSVGSSFSD (164 aa). The active-site Proton donor; for dehydratase activity is D1187. Positions 1542–1579 are methyltransferase; it reads YDVVVACQVLHATRCMKRTLSNVRKLLKPGGNLILVET. The Carrier domain maps to 2485–2562; the sequence is EAISIVLKAM…GLVELVVAKC (78 aa). S2522 bears the O-(pantetheine 4'-phosphoryl)serine mark.

Requires pantetheine 4'-phosphate as cofactor.

It carries out the reaction holo-[2-methylbutanoate polyketide synthase] + 2 malonyl-CoA + S-adenosyl-L-methionine + 2 NADPH + 3 H(+) = (S)-2-methylbutanoyl-[2-methylbutanoate polyketide synthase] + S-adenosyl-L-homocysteine + 2 CO2 + 2 NADP(+) + 2 CoA + H2O. Its pathway is polyketide biosynthesis. Functionally, diketide synthase; part of the gene cluster that mediates the biosynthesis of compactin, also known as mevastatin or ML-236B, and which acts as a potent competitive inhibitor of HMG-CoA reductase. Compactin biosynthesis is performed in two stages. The first stage is catalyzed by the nonaketide synthase mlcA, which belongs to type I polyketide synthases and catalyzes the iterative nine-step formation of the polyketide. This PKS stage is completed by the action of dehydrogenase mlcG, which catalyzes the NADPH-dependent reduction of the unsaturated tetra-, penta- and heptaketide intermediates that arise during the mlcA-mediated biosynthesis of the nonaketide chain and leads to dihydro-ML-236C carboxylate. Covalently bound dihydro-ML-236C carboxylate is released from mlcA by the mlcF esterase. Conversion of dihydro-ML-236C carboxylate into ML-236A carboxylate is subsequently performed with the participation of molecular oxygen and P450 monoogygenase mlcC. Finally, mlcH performs the conversion of ML-236A carboxylate to ML-236B/compactin carboxylate through the addition of the side-chain diketide moiety produced by the diketide synthase mlcB. The sequence is that of Compactin diketide synthase mlcB (mlcB) from Penicillium citrinum.